A 288-amino-acid chain; its full sequence is Pantothenate synthetase (288 aa).

ATP is bound at residue 30–37 (MGALHEGH). The active-site Proton donor is histidine 37. Glutamine 61 is a binding site for (R)-pantoate. Glutamine 61 contacts beta-alanine. 147–150 (GEKD) is an ATP binding site. Glutamine 153 contacts (R)-pantoate. Residues leucine 176 and 184-187 (ISSR) each bind ATP.

The protein belongs to the pantothenate synthetase family. Homodimer.

It localises to the cytoplasm. The catalysed reaction is (R)-pantoate + beta-alanine + ATP = (R)-pantothenate + AMP + diphosphate + H(+). The protein operates within cofactor biosynthesis; (R)-pantothenate biosynthesis; (R)-pantothenate from (R)-pantoate and beta-alanine: step 1/1. Functionally, catalyzes the condensation of pantoate with beta-alanine in an ATP-dependent reaction via a pantoyl-adenylate intermediate. The polypeptide is Pantothenate synthetase (Prosthecochloris aestuarii (strain DSM 271 / SK 413)).